The primary structure comprises 280 residues: Energy-coupling factor transporter ATP-binding protein EcfA1 (280 aa).

The ABC transporter domain occupies 6–241; sequence IELKNVTFRY…GDELLDLGLD (236 aa). 41–48 contacts ATP; that stretch reads GHNGSGKS.

Belongs to the ABC transporter superfamily. Energy-coupling factor EcfA family. As to quaternary structure, forms a stable energy-coupling factor (ECF) transporter complex composed of 2 membrane-embedded substrate-binding proteins (S component), 2 ATP-binding proteins (A component) and 2 transmembrane proteins (T component).

It localises to the cell membrane. Functionally, ATP-binding (A) component of a common energy-coupling factor (ECF) ABC-transporter complex. Unlike classic ABC transporters this ECF transporter provides the energy necessary to transport a number of different substrates. The chain is Energy-coupling factor transporter ATP-binding protein EcfA1 from Streptococcus mutans serotype c (strain ATCC 700610 / UA159).